We begin with the raw amino-acid sequence, 181 residues long: dTTP/UTP pyrophosphatase (181 aa).

Aspartate 67 serves as the catalytic Proton acceptor.

It belongs to the Maf family. YhdE subfamily. It depends on a divalent metal cation as a cofactor.

Its subcellular location is the cytoplasm. It carries out the reaction dTTP + H2O = dTMP + diphosphate + H(+). The enzyme catalyses UTP + H2O = UMP + diphosphate + H(+). Nucleoside triphosphate pyrophosphatase that hydrolyzes dTTP and UTP. May have a dual role in cell division arrest and in preventing the incorporation of modified nucleotides into cellular nucleic acids. This is dTTP/UTP pyrophosphatase from Latilactobacillus sakei subsp. sakei (strain 23K) (Lactobacillus sakei subsp. sakei).